A 598-amino-acid polypeptide reads, in one-letter code: Arginine--tRNA ligase (598 aa).

The short motif at 131-141 (ANPTGPMHVGH) is the 'HIGH' region element. Residues 288-309 (KLPPPKSKKGQPPPQAQPDEEG) form a disordered region.

It belongs to the class-I aminoacyl-tRNA synthetase family. In terms of assembly, monomer.

The protein resides in the cytoplasm. The catalysed reaction is tRNA(Arg) + L-arginine + ATP = L-arginyl-tRNA(Arg) + AMP + diphosphate. This is Arginine--tRNA ligase from Anaeromyxobacter dehalogenans (strain 2CP-C).